Consider the following 162-residue polypeptide: NADH-quinone oxidoreductase subunit I (162 aa).

2 4Fe-4S ferredoxin-type domains span residues 54 to 83 and 93 to 122; these read RRYE…IESE and TRYD…ETQI. [4Fe-4S] cluster contacts are provided by Cys63, Cys66, Cys69, Cys73, Cys102, Cys105, Cys108, and Cys112.

This sequence belongs to the complex I 23 kDa subunit family. As to quaternary structure, NDH-1 is composed of 14 different subunits. Subunits NuoA, H, J, K, L, M, N constitute the membrane sector of the complex. The cofactor is [4Fe-4S] cluster.

It localises to the cell inner membrane. The catalysed reaction is a quinone + NADH + 5 H(+)(in) = a quinol + NAD(+) + 4 H(+)(out). Functionally, NDH-1 shuttles electrons from NADH, via FMN and iron-sulfur (Fe-S) centers, to quinones in the respiratory chain. The immediate electron acceptor for the enzyme in this species is believed to be ubiquinone. Couples the redox reaction to proton translocation (for every two electrons transferred, four hydrogen ions are translocated across the cytoplasmic membrane), and thus conserves the redox energy in a proton gradient. This chain is NADH-quinone oxidoreductase subunit I, found in Burkholderia cenocepacia (strain ATCC BAA-245 / DSM 16553 / LMG 16656 / NCTC 13227 / J2315 / CF5610) (Burkholderia cepacia (strain J2315)).